We begin with the raw amino-acid sequence, 319 residues long: Acetyl-coenzyme A carboxylase carboxyl transferase subunit alpha (319 aa).

The region spanning 35–296 (NIDEEVHRLR…KAQLLADLAD (262 aa)) is the CoA carboxyltransferase C-terminal domain.

It belongs to the AccA family. In terms of assembly, acetyl-CoA carboxylase is a heterohexamer composed of biotin carboxyl carrier protein (AccB), biotin carboxylase (AccC) and two subunits each of ACCase subunit alpha (AccA) and ACCase subunit beta (AccD).

It is found in the cytoplasm. The enzyme catalyses N(6)-carboxybiotinyl-L-lysyl-[protein] + acetyl-CoA = N(6)-biotinyl-L-lysyl-[protein] + malonyl-CoA. The protein operates within lipid metabolism; malonyl-CoA biosynthesis; malonyl-CoA from acetyl-CoA: step 1/1. Component of the acetyl coenzyme A carboxylase (ACC) complex. First, biotin carboxylase catalyzes the carboxylation of biotin on its carrier protein (BCCP) and then the CO(2) group is transferred by the carboxyltransferase to acetyl-CoA to form malonyl-CoA. The polypeptide is Acetyl-coenzyme A carboxylase carboxyl transferase subunit alpha (Shigella sonnei (strain Ss046)).